An 86-amino-acid polypeptide reads, in one-letter code: MKTLLLTLVVVTIICLDLGYTRKCLIKYSQANESSKTCPSGQLLCLKKWEIGNPSGKEVKRGCVATCPKPKKNEIIQCCAKDKCNK.

The N-terminal stretch at 1–21 is a signal peptide; the sequence is MKTLLLTLVVVTIICLDLGYT. Cystine bridges form between Cys-24-Cys-45, Cys-38-Cys-63, Cys-67-Cys-78, and Cys-79-Cys-84.

The protein belongs to the three-finger toxin family. Short-chain subfamily. Orphan group III sub-subfamily. As to expression, expressed by the venom gland.

It is found in the secreted. In Bungarus multicinctus (Many-banded krait), this protein is Short neurotoxin homolog NTL4.